The primary structure comprises 336 residues: Biotin synthase (336 aa).

The 228-residue stretch at 54–281 (NAIQLSTLLS…KAMVRLSAGR (228 aa)) folds into the Radical SAM core domain. 3 residues coordinate [4Fe-4S] cluster: Cys69, Cys73, and Cys76. The [2Fe-2S] cluster site is built by Cys113, Cys144, Cys204, and Arg276.

Belongs to the radical SAM superfamily. Biotin synthase family. Homodimer. [4Fe-4S] cluster is required as a cofactor. The cofactor is [2Fe-2S] cluster.

It catalyses the reaction (4R,5S)-dethiobiotin + (sulfur carrier)-SH + 2 reduced [2Fe-2S]-[ferredoxin] + 2 S-adenosyl-L-methionine = (sulfur carrier)-H + biotin + 2 5'-deoxyadenosine + 2 L-methionine + 2 oxidized [2Fe-2S]-[ferredoxin]. It participates in cofactor biosynthesis; biotin biosynthesis; biotin from 7,8-diaminononanoate: step 2/2. In terms of biological role, catalyzes the conversion of dethiobiotin (DTB) to biotin by the insertion of a sulfur atom into dethiobiotin via a radical-based mechanism. This is Biotin synthase from Burkholderia pseudomallei (strain 1106a).